Consider the following 741-residue polypeptide: Penicillin-binding protein 1B (741 aa).

Residues 1 to 12 lie on the Cytoplasmic side of the membrane; the sequence is MYPVNLKLSIKF. Residues 13 to 33 form a helical; Signal-anchor for type II membrane protein membrane-spanning segment; that stretch reads LFYFFLYFLLIIIIYGVYLYF. Residues 34–741 are Extracellular-facing; sequence KINQVIHGKI…WIRNHNIFCT (708 aa). A transglycosylase region spans residues 139-311; sequence LRLDPQLIAM…SLYNPWNNPV (173 aa). The Proton donor; for transglycosylase activity role is filled by glutamate 177. The segment at 395–687 is transpeptidase; the sequence is ENAIRHGIQQ…STGAMKIYHN (293 aa). The active-site Acyl-ester intermediate; for transpeptidase activity is the serine 454.

The protein in the N-terminal section; belongs to the glycosyltransferase 51 family. It in the C-terminal section; belongs to the transpeptidase family.

It localises to the cell membrane. The enzyme catalyses [GlcNAc-(1-&gt;4)-Mur2Ac(oyl-L-Ala-gamma-D-Glu-L-Lys-D-Ala-D-Ala)](n)-di-trans,octa-cis-undecaprenyl diphosphate + beta-D-GlcNAc-(1-&gt;4)-Mur2Ac(oyl-L-Ala-gamma-D-Glu-L-Lys-D-Ala-D-Ala)-di-trans,octa-cis-undecaprenyl diphosphate = [GlcNAc-(1-&gt;4)-Mur2Ac(oyl-L-Ala-gamma-D-Glu-L-Lys-D-Ala-D-Ala)](n+1)-di-trans,octa-cis-undecaprenyl diphosphate + di-trans,octa-cis-undecaprenyl diphosphate + H(+). It carries out the reaction Preferential cleavage: (Ac)2-L-Lys-D-Ala-|-D-Ala. Also transpeptidation of peptidyl-alanyl moieties that are N-acyl substituents of D-alanine.. It functions in the pathway cell wall biogenesis; peptidoglycan biosynthesis. Its function is as follows. Cell wall formation. Synthesis of cross-linked peptidoglycan from the lipid intermediates. The enzyme has a penicillin-insensitive transglycosylase N-terminal domain (formation of linear glycan strands) and a penicillin-sensitive transpeptidase C-terminal domain (cross-linking of the peptide subunits). This chain is Penicillin-binding protein 1B (mrcB), found in Buchnera aphidicola subsp. Baizongia pistaciae (strain Bp).